The chain runs to 425 residues: Type II secretion system protein L (425 aa).

The Cytoplasmic segment spans residues 1 to 273; sequence MKIAGKWKRK…DKAWQNTLLP (273 aa). Residues 274-290 form a helical membrane-spanning segment; that stretch reads WRGVGIAFACYLLLVVA. Topologically, residues 291–425 are periplasmic; the sequence is DAGWAHYQLY…EGRLTLRSQQ (135 aa).

This sequence belongs to the GSP L family. As to quaternary structure, type II secretion system is composed of four main components: the outer membrane complex, the inner membrane complex, the cytoplasmic secretion ATPase and the periplasm-spanning pseudopilus. Forms homodimers. Interacts with OutM/GspM. Interacts with OutE/GspE and OutF/GspF.

Its subcellular location is the cell inner membrane. Inner membrane component of the type II secretion system required for the energy-dependent secretion of extracellular factors such as proteases and toxins from the periplasm. Plays a role in the complex assembly and recruits OutM resulting in a stable complex in the inner membrane. Provides thus a link between the energy-providing OutE protein in the cytoplasm and the rest of the T2SS machinery. This chain is Type II secretion system protein L (outL), found in Pectobacterium carotovorum subsp. carotovorum (Erwinia carotovora subsp. carotovora).